The primary structure comprises 567 residues: Chitinase 3 (567 aa).

Residues 1-16 (MLYLLTIFSLLLPALA) form the signal peptide. Residues 23–313 (SNVAVYWGQN…ENMKAIVKKA (291 aa)) enclose the GH18 domain. The active-site Proton donor is the Glu157. Residue Asn159 is glycosylated (N-linked (GlcNAc...) asparagine). Positions 313–471 (ASPGEETTSS…TSALSSSTTT (159 aa)) are disordered. Low complexity-rich tracts occupy residues 319–436 (TTSS…SLSS) and 444–471 (STTT…STTT).

This sequence belongs to the glycosyl hydrolase 18 family. Chitinase class III subfamily.

It is found in the secreted. It carries out the reaction Random endo-hydrolysis of N-acetyl-beta-D-glucosaminide (1-&gt;4)-beta-linkages in chitin and chitodextrins.. Its function is as follows. Chitinase involved in the remodeling of chitin in the fungal cell wall. Plays a role in cell separation. This chain is Chitinase 3 (CHT3), found in Candida albicans (strain SC5314 / ATCC MYA-2876) (Yeast).